A 468-amino-acid chain; its full sequence is MVVTRIAPSPTGDPHVGTAYIALFNYAWARRNGGRFIVRIEDTDRARYVPGAEERILAALKWLGLSYDEGPDVGGPHGPYRQSERLPLYQKYAEELLKRGWAYRAFETPEELEQIRKEKGGYDGRARNIPPEEAEERARRGEPHVIRLKVPRPGTTEVKDELRGVVVYDNQEIPDVVLLKSDGYPTYHLANVVDDHLMGVTDVIRAEEWLVSTPIHVLLYRAFGWEAPRFYHMPLLRNPDKTKISKRKSHTSLDWYKAEGFLPEALRNYLCLMGFSMPDGREIFTLEEFIQAFTWERVSLGGPVFDLEKLRWMNGKYIREVLSLEEVAERVKPFLREAGLSWESEAYLRRAVELMRPRFDTLKEFPEKARYLFTEDYPVSEKAQRKLEEGLPLLKELYPRLRTQEEWTEAALEALLRGFAAEKGVKLGQVAQPLRAALTGSLETPGLFEILALLGKERALRRLERALA.

The 'HIGH' region motif lies at 8-18 (PSPTGDPHVGT). The 'KMSKS' region motif lies at 243–247 (KISKR). An ATP-binding site is contributed by K246.

It belongs to the class-I aminoacyl-tRNA synthetase family. Glutamate--tRNA ligase type 1 subfamily. Monomer.

The protein localises to the cytoplasm. The enzyme catalyses tRNA(Glu) + L-glutamate + ATP = L-glutamyl-tRNA(Glu) + AMP + diphosphate. Functionally, catalyzes the attachment of glutamate to tRNA(Glu) in a two-step reaction: glutamate is first activated by ATP to form Glu-AMP and then transferred to the acceptor end of tRNA(Glu). This Thermus thermophilus (strain ATCC BAA-163 / DSM 7039 / HB27) protein is Glutamate--tRNA ligase.